Consider the following 227-residue polypeptide: Endo-1,4-beta-xylanase 1 (227 aa).

Positions 1-19 (MVSLKSVLAAATAVSSAIA) are cleaved as a signal peptide. The GH11 domain maps to 37 to 225 (QVTPNAEGWH…SSGESDIYVQ (189 aa)). The active-site Nucleophile is the E121. Residue E212 is the Proton donor of the active site.

The protein belongs to the glycosyl hydrolase 11 (cellulase G) family.

It catalyses the reaction Endohydrolysis of (1-&gt;4)-beta-D-xylosidic linkages in xylans.. The protein operates within glycan degradation; xylan degradation. The protein is Endo-1,4-beta-xylanase 1 of Humicola insolens (Soft-rot fungus).